A 57-amino-acid chain; its full sequence is UPF0391 membrane protein RPB_2510 (57 aa).

Transmembrane regions (helical) follow at residues 6–26 and 35–55; these read WALIFLVISVIAGIFGFTGIS and ILFYIFAVIFIVLLILGFTIF.

It belongs to the UPF0391 family.

The protein resides in the cell membrane. In Rhodopseudomonas palustris (strain HaA2), this protein is UPF0391 membrane protein RPB_2510.